Consider the following 626-residue polypeptide: Elongation factor 4 (626 aa).

Positions 14–195 (SVIRNFCIIA…QIVMDVPAPH (182 aa)) constitute a tr-type G domain. Residues 26–31 (DHGKST) and 142–145 (NKID) each bind GTP. The disordered stretch occupies residues 603 to 626 (LSTGEDSNDRDTKDKIRAAQKTEG). Over residues 609 to 626 (SNDRDTKDKIRAAQKTEG) the composition is skewed to basic and acidic residues.

This sequence belongs to the TRAFAC class translation factor GTPase superfamily. Classic translation factor GTPase family. LepA subfamily.

The protein resides in the cell membrane. It carries out the reaction GTP + H2O = GDP + phosphate + H(+). Required for accurate and efficient protein synthesis under certain stress conditions. May act as a fidelity factor of the translation reaction, by catalyzing a one-codon backward translocation of tRNAs on improperly translocated ribosomes. Back-translocation proceeds from a post-translocation (POST) complex to a pre-translocation (PRE) complex, thus giving elongation factor G a second chance to translocate the tRNAs correctly. Binds to ribosomes in a GTP-dependent manner. The chain is Elongation factor 4 from Bifidobacterium longum subsp. infantis (strain ATCC 15697 / DSM 20088 / JCM 1222 / NCTC 11817 / S12).